Reading from the N-terminus, the 101-residue chain is Thiosulfate sulfurtransferase GlpE (101 aa).

The region spanning 17–101 (EAKSVQIVDI…GFSAWHEANA (85 aa)) is the Rhodanese domain. Cys-65 (cysteine persulfide intermediate) is an active-site residue.

The protein belongs to the GlpE family.

It is found in the cytoplasm. It carries out the reaction thiosulfate + hydrogen cyanide = thiocyanate + sulfite + 2 H(+). The enzyme catalyses thiosulfate + [thioredoxin]-dithiol = [thioredoxin]-disulfide + hydrogen sulfide + sulfite + 2 H(+). In terms of biological role, transferase that catalyzes the transfer of sulfur from thiosulfate to thiophilic acceptors such as cyanide or dithiols. May function in a CysM-independent thiosulfate assimilation pathway by catalyzing the conversion of thiosulfate to sulfite, which can then be used for L-cysteine biosynthesis. In Shewanella oneidensis (strain ATCC 700550 / JCM 31522 / CIP 106686 / LMG 19005 / NCIMB 14063 / MR-1), this protein is Thiosulfate sulfurtransferase GlpE.